A 196-amino-acid chain; its full sequence is Lipoprotein signal peptidase (196 aa).

The next 3 helical transmembrane spans lie at L43–F63, A75–S95, and T97–D117. Active-site residues include D126 and D144. The helical transmembrane segment at Y135–I155 threads the bilayer.

The protein belongs to the peptidase A8 family.

Its subcellular location is the cell inner membrane. The enzyme catalyses Release of signal peptides from bacterial membrane prolipoproteins. Hydrolyzes -Xaa-Yaa-Zaa-|-(S,diacylglyceryl)Cys-, in which Xaa is hydrophobic (preferably Leu), and Yaa (Ala or Ser) and Zaa (Gly or Ala) have small, neutral side chains.. The protein operates within protein modification; lipoprotein biosynthesis (signal peptide cleavage). This protein specifically catalyzes the removal of signal peptides from prolipoproteins. The protein is Lipoprotein signal peptidase of Rickettsia typhi (strain ATCC VR-144 / Wilmington).